A 367-amino-acid polypeptide reads, in one-letter code: Innexin inx4 (367 aa).

Topologically, residues 1–21 (MYAAVKPLSKYLQFKSVHIYD) are cytoplasmic. A helical transmembrane segment spans residues 22–42 (AIFTLHSKVTVALLLACTFLL). Residues 43 to 110 (SSKQYFGDPI…PENRNYITYY (68 aa)) are Extracellular-facing. The helical transmembrane segment at 111–131 (QWVVLVLLLESFVFYMPAFLW) threads the bilayer. The Cytoplasmic segment spans residues 132–186 (KIWEGGRLKHLCDDFHKMAVCKDKSRTHLRVLVNYFSSDYKETHFRYFVSYVFCE). The helical transmembrane segment at 187–207 (ILNLSISILNFLLLDVFFGGF) threads the bilayer. Residues 208-268 (WGRYRNALLS…LLPLNILNEK (61 aa)) lie on the Extracellular side of the membrane. A helical membrane pass occupies residues 269 to 289 (IFAFLWIWFILVAMLISLKFL). Over 290–367 (YRLATVLYPG…IKIPPGADKI (78 aa)) the chain is Cytoplasmic.

This sequence belongs to the pannexin family. Expressed in nurse cells and oocyte during oogenesis. Uniform expression in imaginal wing disk and low expression in developing imaginal CNS. Expressed in embryonic pole cells and primordial germ cells.

It localises to the cell membrane. Its subcellular location is the cell junction. It is found in the gap junction. In terms of biological role, structural component of the gap junctions in germline cells. Required for differentiation and survival of germline cysts in females and of spermatogonia in males; gap junctional communication between spermatogonia and somatic cyst cells may be required for normal differentiation and survival of spermatogonia. The chain is Innexin inx4 (zpg) from Drosophila melanogaster (Fruit fly).